The following is a 929-amino-acid chain: Collagen alpha-1(XII) chain (929 aa).

The 49-residue stretch at 1–49 (DVEIFAVGVKDAVRSELEAIATPPTATHVYTVEDFDAFQRISFELTQSI) folds into the VWFA 1 domain. 6 Fibronectin type-III domains span residues 67 to 156 (PPRD…LEVR), 158 to 250 (APRN…VGEP), 251 to 340 (KNLR…LQER), 342 to 432 (SPRD…ASPD), 434 to 521 (KIVK…LSPF), and 523 to 613 (APRS…TLRD). Residue Asn98 is glycosylated (N-linked (GlcNAc...) asparagine). O-linked (Xyl...) (chondroitin sulfate) serine glycans are attached at residues Ser231, Ser324, and Ser415. Residues 633–805 (DIVLLVDGSW…SLLTNIVNDL (173 aa)) form the VWFA 2 domain. One can recognise a Fibronectin type-III 7 domain in the interval 821-910 (PPSNLVTSEP…AGTETTLPIP (90 aa)).

It belongs to the fibril-associated collagens with interrupted helices (FACIT) family. As to quaternary structure, trimer of identical chains each containing 190 kDa of non-triple-helical sequences. Post-translationally, the triple-helical tail is stabilized by disulfide bonds at each end. In terms of processing, prolines at the third position of the tripeptide repeating unit (G-X-Y) are hydroxylated in some or all of the chains.

The protein resides in the secreted. It localises to the extracellular space. It is found in the extracellular matrix. Its function is as follows. Type XII collagen interacts with type I collagen-containing fibrils, the COL1 domain could be associated with the surface of the fibrils, and the COL2 and NC3 domains may be localized in the perifibrillar matrix. Could play a developmental role in regeneration. This Notophthalmus viridescens (Eastern newt) protein is Collagen alpha-1(XII) chain.